Reading from the N-terminus, the 155-residue chain is UBA-like domain-containing protein 1 (155 aa).

Residues 81–155 form a disordered region; sequence KASESFNSSS…KASAAMEAER (75 aa). Residues 83-96 are compositionally biased toward low complexity; sequence SESFNSSSSPSMAT. The segment covering 112–127 has biased composition (polar residues); it reads ANQQSLWTQGPSAQQT. A compositionally biased stretch (low complexity) spans 139-155; the sequence is QQAASEQKASAAMEAER.

Belongs to the UBALD family.

The chain is UBA-like domain-containing protein 1 (ubald1) from Danio rerio (Zebrafish).